A 611-amino-acid polypeptide reads, in one-letter code: Solute carrier family 23 member 3 (611 aa).

Residues 1 to 52 (MSRSPLHPIPLLSEGYQDTPAPLPPLLPPLQNPSSRSWASRVFGPSTWGLSC) lie on the Cytoplasmic side of the membrane. Residues 53-73 (LLALQHFLVLASLLWASHLLL) traverse the membrane as a helical segment. The Extracellular segment spans residues 74 to 88 (LHGLPPGGLSYPPAQ). A helical membrane pass occupies residues 89–109 (LLASSFFSCGLSTVLQTWMGS). Residues 110 to 168 (RLPLIQAPSLEFLIPALVLTNQKLPLTTKTPGNASLSLPLCSLTRSCHGLELWNTSLRE) lie on the Cytoplasmic side of the membrane. Residues 169–189 (VSGAVVVSGLLQGTIGLLGVP) form a helical membrane-spanning segment. Topologically, residues 190–191 (GR) are extracellular. Residues 192–212 (VFPYCGPLVLAPSLVVAGLSA) form a helical membrane-spanning segment. Residues 213-215 (HKE) lie on the Cytoplasmic side of the membrane. A helical membrane pass occupies residues 216-236 (VAQFCSAHWGLALLLILLMVV). The Extracellular segment spans residues 237–269 (CSQHLGSCQIPLCSWRPSSTSTHICIPVFRLLS). A helical transmembrane segment spans residues 270–290 (VLAPVACVWFISAFVGTSVIP). Residues 291–319 (LQLSEPSDAPWFWLPHPGEWEWPLLTPRA) lie on the Cytoplasmic side of the membrane. A helical membrane pass occupies residues 320–340 (LAAGISMALAASTSSLGCYAL). The Extracellular portion of the chain corresponds to 341–358 (CGQLLRLSPPPPHACSRG). A helical transmembrane segment spans residues 359–379 (LSLEGLGSVLAGLLGSPLGTA). The Cytoplasmic segment spans residues 380–397 (SSFPNVGTVSLFQTGSRR). The helical transmembrane segment at 398-417 (VAHLVGLFCMGLGLSPRLAQ) threads the bilayer. At 418-426 (LFTSIPLPV) the chain is on the extracellular side. Residues 427-449 (LGGVLGVTQAVVLSAGFSSFHLA) form a helical membrane-spanning segment. At 450 to 455 (DIDSGR) the chain is on the cytoplasmic side. A helical transmembrane segment spans residues 456-475 (NVFIVGFSIFMALLLPRWLR). Topologically, residues 476–489 (EAPVLLNTGWSPLD) are extracellular. A helical membrane pass occupies residues 490–510 (MFLRSLLAEPIFLAGLLGFLL). Residues 511 to 611 (ENTISGTRAE…TASREGVRSQ (101 aa)) are Cytoplasmic-facing. Residues 574-611 (PEDSGDEGGSSKTGERADLLPNSGESYSTASREGVRSQ) are disordered. Positions 596-605 (SGESYSTASR) are enriched in polar residues.

The protein belongs to the nucleobase:cation symporter-2 (NCS2) (TC 2.A.40) family.

Its subcellular location is the membrane. It is found in the cytoplasm. It catalyses the reaction hypoxanthine(out) + Na(+)(out) = hypoxanthine(in) + Na(+)(in). Functionally, acts as a sodium-dependent hypoxanthine transporter. May show xanthine-hypoxanthine exchange activity. The protein is Solute carrier family 23 member 3 (Slc23a3) of Mus musculus (Mouse).